The following is a 239-amino-acid chain: UDP-2,3-diacylglucosamine hydrolase (239 aa).

Mn(2+) is bound by residues aspartate 8, histidine 10, aspartate 41, asparagine 78, and histidine 113. Substrate is bound at residue 78–79 (NR). Substrate-binding residues include aspartate 121, serine 159, asparagine 163, lysine 166, and histidine 194. Positions 194 and 196 each coordinate Mn(2+).

Belongs to the LpxH family. Requires Mn(2+) as cofactor.

It localises to the cell inner membrane. It carries out the reaction UDP-2-N,3-O-bis[(3R)-3-hydroxytetradecanoyl]-alpha-D-glucosamine + H2O = 2-N,3-O-bis[(3R)-3-hydroxytetradecanoyl]-alpha-D-glucosaminyl 1-phosphate + UMP + 2 H(+). It functions in the pathway glycolipid biosynthesis; lipid IV(A) biosynthesis; lipid IV(A) from (3R)-3-hydroxytetradecanoyl-[acyl-carrier-protein] and UDP-N-acetyl-alpha-D-glucosamine: step 4/6. In terms of biological role, hydrolyzes the pyrophosphate bond of UDP-2,3-diacylglucosamine to yield 2,3-diacylglucosamine 1-phosphate (lipid X) and UMP by catalyzing the attack of water at the alpha-P atom. Involved in the biosynthesis of lipid A, a phosphorylated glycolipid that anchors the lipopolysaccharide to the outer membrane of the cell. The sequence is that of UDP-2,3-diacylglucosamine hydrolase from Shewanella oneidensis (strain ATCC 700550 / JCM 31522 / CIP 106686 / LMG 19005 / NCIMB 14063 / MR-1).